Here is a 272-residue protein sequence, read N- to C-terminus: Thiazole synthase (272 aa).

Lys-111 (schiff-base intermediate with DXP) is an active-site residue. Residues Gly-172, 198–199 (AG), and 220–221 (NS) contribute to the 1-deoxy-D-xylulose 5-phosphate site. The disordered stretch occupies residues 249-272 (SGRLPRRDQASASSPTTGLVQSPQ). Over residues 258-272 (ASASSPTTGLVQSPQ) the composition is skewed to polar residues.

It belongs to the ThiG family. In terms of assembly, homotetramer. Forms heterodimers with either ThiH or ThiS.

The protein resides in the cytoplasm. It carries out the reaction [ThiS sulfur-carrier protein]-C-terminal-Gly-aminoethanethioate + 2-iminoacetate + 1-deoxy-D-xylulose 5-phosphate = [ThiS sulfur-carrier protein]-C-terminal Gly-Gly + 2-[(2R,5Z)-2-carboxy-4-methylthiazol-5(2H)-ylidene]ethyl phosphate + 2 H2O + H(+). It functions in the pathway cofactor biosynthesis; thiamine diphosphate biosynthesis. Catalyzes the rearrangement of 1-deoxy-D-xylulose 5-phosphate (DXP) to produce the thiazole phosphate moiety of thiamine. Sulfur is provided by the thiocarboxylate moiety of the carrier protein ThiS. In vitro, sulfur can be provided by H(2)S. This chain is Thiazole synthase, found in Synechococcus sp. (strain CC9605).